A 459-amino-acid chain; its full sequence is FBD-associated F-box protein At1g61320 (459 aa).

Positions 1–25 are disordered; that stretch reads MAPPTKRTRVEMAESSNKRMKPSET. Residues 21 to 69 form the F-box domain; it reads KPSETVPEDVLELMMSTYLPVQSLLTTRVLSKRFRETEVRSLDLDFSGI. The FBD domain maps to 396–428; the sequence is VKIIGYKGHWHELDIVEFFVKNAPSLKRLELQM.

The sequence is that of FBD-associated F-box protein At1g61320 from Arabidopsis thaliana (Mouse-ear cress).